Here is a 245-residue protein sequence, read N- to C-terminus: tRNA (guanine-N(1)-)-methyltransferase (245 aa).

Residues G113 and 133–138 each bind S-adenosyl-L-methionine; that span reads IGDYVL.

The protein belongs to the RNA methyltransferase TrmD family. In terms of assembly, homodimer.

It is found in the cytoplasm. The catalysed reaction is guanosine(37) in tRNA + S-adenosyl-L-methionine = N(1)-methylguanosine(37) in tRNA + S-adenosyl-L-homocysteine + H(+). In terms of biological role, specifically methylates guanosine-37 in various tRNAs. This chain is tRNA (guanine-N(1)-)-methyltransferase, found in Anoxybacillus flavithermus (strain DSM 21510 / WK1).